A 239-amino-acid chain; its full sequence is Cysteine-rich venom protein 2 (239 aa).

Positions 1–19 (MIALIVLPILAAVLQQSSG) are cleaved as a signal peptide. One can recognise an SCP domain in the interval 38-166 (VDLHNSLRRS…EYSYFYVCQY (129 aa)). Intrachain disulfides connect cysteine 75/cysteine 153, cysteine 92/cysteine 167, cysteine 148/cysteine 164, cysteine 186/cysteine 193, cysteine 189/cysteine 198, cysteine 202/cysteine 234, and cysteine 219/cysteine 232. In terms of domain architecture, ShKT spans 198-234 (CTNPCPKKISTQLPRFGPQAGCQDKQMQSDCSATCFC).

It belongs to the CRISP family. Expressed by the venom gland.

The protein resides in the secreted. Weakly blocks contraction of smooth muscle elicited by high potassium-induced depolarization, but does not block caffeine-stimulated contraction. May target voltage-gated calcium channels on smooth muscle. The polypeptide is Cysteine-rich venom protein 2 (Sistrurus catenatus edwardsii (Desert massasauga)).